The primary structure comprises 158 residues: Histone H2B.1 (158 aa).

N6-acetyllysine is present on residues Lys7 and Lys25. Disordered stretches follow at residues 26–45 (AAAG…PKKG) and 135–158 (VHNF…GQQT). Over residues 135–144 (VHNFESETSK) the composition is skewed to basic and acidic residues. The segment covering 147–158 (SQGRKRGRGQQT) has biased composition (basic residues).

This sequence belongs to the histone H2B family. The nucleosome is a histone octamer containing two molecules each of H2A, H2B, H3 and H4 assembled in one H3-H4 heterotetramer and two H2A-H2B heterodimers. The octamer wraps approximately 147 bp of DNA. In terms of processing, can be acetylated to form H2BK6ac and H2BK33ac. As to expression, expressed in the generative cell within the bicellular pollen. Not detected in other reproductive or vegetative tissues.

Its subcellular location is the nucleus. The protein resides in the chromosome. Functionally, core component of nucleosome. Nucleosomes wrap and compact DNA into chromatin, limiting DNA accessibility to the cellular machineries which require DNA as a template. Histones thereby play a central role in transcription regulation, DNA repair, DNA replication and chromosomal stability. DNA accessibility is regulated via a complex set of post-translational modifications of histones, also called histone code, and nucleosome remodeling. This is Histone H2B.1 from Lilium longiflorum (Trumpet lily).